The primary structure comprises 115 residues: Protachykinin-1 (115 aa).

The first 19 residues, 1 to 19 (MKILVALAVLALVSTQLFA), serve as a signal peptide directing secretion. A propeptide spanning residues 20–56 (EDIRANDDLNYWSDWSDSDQIKEELPEPFEHLLQRIA) is cleaved from the precursor. A methionine amide mark is found at Met-68 and Met-92.

Belongs to the tachykinin family. The substance P form is cleaved at Pro-59 by the prolyl endopeptidase FAP (seprase) activity (in vitro). Substance P is also cleaved and degraded by Angiotensin-converting enzyme (ACE) and neprilysin (MME).

The protein localises to the secreted. Functionally, tachykinins are active peptides which excite neurons, evoke behavioral responses, are potent vasodilators and secretagogues, and contract (directly or indirectly) many smooth muscles. The chain is Protachykinin-1 (TAC1) from Oryctolagus cuniculus (Rabbit).